A 403-amino-acid chain; its full sequence is S-adenosylmethionine synthase (403 aa).

ATP is bound at residue His17. Residue Asp19 participates in Mg(2+) binding. Glu45 is a K(+) binding site. 2 residues coordinate L-methionine: Glu58 and Gln104. Residues 104–114 form a flexible loop region; it reads QSPDIAQGVDT. ATP contacts are provided by residues 179-181, 250-251, Asp259, 265-266, Ala282, and Lys286; these read DGK, KF, and RK. Asp259 serves as a coordination point for L-methionine. Lys290 is an L-methionine binding site.

Belongs to the AdoMet synthase family. Homotetramer; dimer of dimers. Mg(2+) is required as a cofactor. Requires K(+) as cofactor.

The protein resides in the cytoplasm. The catalysed reaction is L-methionine + ATP + H2O = S-adenosyl-L-methionine + phosphate + diphosphate. It functions in the pathway amino-acid biosynthesis; S-adenosyl-L-methionine biosynthesis; S-adenosyl-L-methionine from L-methionine: step 1/1. Catalyzes the formation of S-adenosylmethionine (AdoMet) from methionine and ATP. The overall synthetic reaction is composed of two sequential steps, AdoMet formation and the subsequent tripolyphosphate hydrolysis which occurs prior to release of AdoMet from the enzyme. This chain is S-adenosylmethionine synthase, found in Mycobacterium bovis (strain ATCC BAA-935 / AF2122/97).